A 399-amino-acid chain; its full sequence is MAIPALEPQLHDADTSSNNMSSNSTDSGYDTNSTTPLEKSEKPNTQELKQQQLDPKRPPFVRVPDLFGSIMSTKPVVNPNYFAAKARGDRWIARVMNFNKAVAARNSKVDLCFLASMWAPDAPEDRLVMMLDWNHWVFLFDDQFDEGHLKEDPAAAAEEVKQTIAIMGGNAPRYTAESNPIRYVFQQCWDRLKAVSSQEMQQRWIDQHKRYFDQLLVQVDQQVGGENFTRDVEAYMDLRRGTIGVYPAISLSEYGAGVNVPQHVYDHPSLQECMKVSADLVTLVNDVLSYRKDLELGVDHNLMSLLMQRDNLSAQQAVDVIGDMVNECYRRWYLALAELPSYGEKIDYNVMKFVEICRAVAQGNLYWSFQTGRYLGPEGHEVHETGIMYLPPAANLVVA.

Residues 1–60 (MAIPALEPQLHDADTSSNNMSSNSTDSGYDTNSTTPLEKSEKPNTQELKQQQLDPKRPPF) form a disordered region. Residues 15–27 (TSSNNMSSNSTDS) are compositionally biased toward low complexity. The span at 28-37 (GYDTNSTTPL) shows a compositional bias: polar residues. Mg(2+) is bound by residues aspartate 141, asparagine 285, and serine 289. The short motif at 141–145 (DDQFD) is the DDXXD motif element. (2E,6E)-farnesyl diphosphate is bound by residues arginine 373 and tyrosine 374.

Belongs to the terpene synthase family. Requires Mg(2+) as cofactor.

It carries out the reaction (2E,6E)-farnesyl diphosphate + H2O = presilphiperfolan-8beta-ol + diphosphate. The protein operates within secondary metabolite biosynthesis. Its function is as follows. Presilphiperfolan-8-beta-ol synthase; part of the gene cluster that mediates the biosynthesis of botrydial. Botrydial is necessary for colonization of plant tissue by the T4 strain. It is a strain-dependent virulence factor since highly aggressive strains like SAS56 or B05 still retain substantial virulence when botrydial synthesis is impaired, since they produce also botcinic acid. The first step of botrydial biosynthesis is performed by the sesquiterpene synthase BOT2 which catalyzes the cyclization of farnesyl diphosphate (FPP) to presilphiperfolan-8-beta-ol (PSP). The cytochrome P450 monooxygenase BOT4 then catalyzes the hydroxylation at C-4 to give a probotryane intermediate. Acetylation of the hydroxyl at C-4 is carried out by the acetyltransferase BOT5, followed by the combined action of the P450 monooxygenases BOT3 and BOT1, to yield finally the glycol, via the regio- and stereospecific hydroxylations at C-10 and C-15 of the probotryane intermediates, respectively. The cleavage of the C10-C15 bond of probotryane skeleton is an intriguing and chemically important reaction, which could be mediated by some of the monooxygenases or by a combination of them. It is possible that either BOT3 or BOT1 would oxidize either the 10- or the 15-hydroxy group to the hydroperoxide derivative, which would then undergo heterolytic fragmentation to give the dialdehyde botrydial. Finally, the dehydrogenase BOT7 might be involved in the conversion of botrydial to dihydrobotrydial. The polypeptide is Presilphiperfolan-8-beta-ol synthase (BOT2) (Botryotinia fuckeliana (Noble rot fungus)).